The sequence spans 188 residues: MMKSSFLIVPILALTLPFLGAEEQNQEKLTRCESDKRLFNEEKVKYIPIYYMLNRFPSYGFFYQHRSAVSPNRQFIPYPYYARPVVAGPHAQKPQWQDQPNVYPPTVARRPRPHASFIAIPPKKNQDKTAIPAINSIATVEPTIVPATEPIVNAEPIVNAVVTPEASSEFLITSAPETTTVQVTSPVV.

The signal sequence occupies residues 1-21 (MMKSSFLIVPILALTLPFLGA). Thr143 and Thr148 each carry an O-linked (GalNAc...) threonine glycan. Thr163 carries the phosphothreonine modification. Ser167 is subject to Phosphoserine; alternate. Ser167 carries an O-linked (GalNAc...) serine; alternate glycan. Thr184 is a glycosylation site (O-linked (GalNAc...) threonine). Ser185 bears the Phosphoserine mark.

This sequence belongs to the kappa-casein family. Mammary gland specific. Secreted in milk.

It is found in the secreted. Functionally, kappa-casein stabilizes micelle formation, preventing casein precipitation in milk. This Sus scrofa (Pig) protein is Kappa-casein (CSN3).